The following is a 104-amino-acid chain: L-rhamnose mutarotase (104 aa).

Substrate is bound at residue Tyr-18. His-22 serves as the catalytic Proton donor. Residues Tyr-41 and 76-77 each bind substrate; that span reads WW.

It belongs to the rhamnose mutarotase family. Homodimer.

It is found in the cytoplasm. The enzyme catalyses alpha-L-rhamnose = beta-L-rhamnose. It participates in carbohydrate metabolism; L-rhamnose metabolism. In terms of biological role, involved in the anomeric conversion of L-rhamnose. The polypeptide is L-rhamnose mutarotase (Salmonella arizonae (strain ATCC BAA-731 / CDC346-86 / RSK2980)).